A 243-amino-acid polypeptide reads, in one-letter code: MYSGQHIKEPVTRVAGLQKSVLPMLVVDSITLFYGNRKVIDNVSFSIRPGEIITILGPNGGGKTSLVRVLVGINQDYIGTIHYTKRPIIAYMPQNFKVNSFMPMTVEYLLLSACWGRGISLDLRAVIQYVDISKLLTRQISELSAGEIQLVLLARCMVMKPDLIVLDEPVSCMDVEAKNNFYRLIGKLVSKYNISIIMTSHDLHCVMACSDRVICINRSIRCEGTPEEITESAKFMSVFPENV.

In terms of domain architecture, ABC transporter spans 25–242 (LVVDSITLFY…AKFMSVFPEN (218 aa)). 57 to 64 (GPNGGGKT) lines the ATP pocket.

Belongs to the ABC transporter superfamily. Zinc importer (TC 3.A.1.15.5) family. As to quaternary structure, the complex is composed of two ATP-binding proteins (ZnuC), two transmembrane proteins (ZnuB) and a solute-binding protein (ZnuA).

The protein resides in the cell inner membrane. It catalyses the reaction Zn(2+)(out) + ATP(in) + H2O(in) = Zn(2+)(in) + ADP(in) + phosphate(in) + H(+)(in). In terms of biological role, part of the ABC transporter complex ZnuABC involved in zinc import. Responsible for energy coupling to the transport system. The protein is Zinc import ATP-binding protein ZnuC of Anaplasma phagocytophilum (strain HZ).